Consider the following 231-residue polypeptide: Endonuclease NucS (231 aa).

Belongs to the NucS endonuclease family.

The protein localises to the cytoplasm. Cleaves both 3' and 5' ssDNA extremities of branched DNA structures. The protein is Endonuclease NucS of Arthrobacter sp. (strain FB24).